The primary structure comprises 366 residues: tRNA/tmRNA (uracil-C(5))-methyltransferase (366 aa).

The S-adenosyl-L-methionine site is built by Q190, Y218, N223, E239, and D299. Residue C324 is the Nucleophile of the active site. E358 serves as the catalytic Proton acceptor.

The protein belongs to the class I-like SAM-binding methyltransferase superfamily. RNA M5U methyltransferase family. TrmA subfamily.

It catalyses the reaction uridine(54) in tRNA + S-adenosyl-L-methionine = 5-methyluridine(54) in tRNA + S-adenosyl-L-homocysteine + H(+). The catalysed reaction is uridine(341) in tmRNA + S-adenosyl-L-methionine = 5-methyluridine(341) in tmRNA + S-adenosyl-L-homocysteine + H(+). In terms of biological role, dual-specificity methyltransferase that catalyzes the formation of 5-methyluridine at position 54 (m5U54) in all tRNAs, and that of position 341 (m5U341) in tmRNA (transfer-mRNA). The protein is tRNA/tmRNA (uracil-C(5))-methyltransferase of Escherichia coli O127:H6 (strain E2348/69 / EPEC).